Consider the following 547-residue polypeptide: Chaperonin GroEL 1 (547 aa).

ATP contacts are provided by residues 30-33 (TLGP), Lys51, 87-91 (DGTTT), Gly415, and Asp495.

It belongs to the chaperonin (HSP60) family. As to quaternary structure, forms a cylinder of 14 subunits composed of two heptameric rings stacked back-to-back. Interacts with the co-chaperonin GroES.

Its subcellular location is the cytoplasm. The enzyme catalyses ATP + H2O + a folded polypeptide = ADP + phosphate + an unfolded polypeptide.. In terms of biological role, together with its co-chaperonin GroES, plays an essential role in assisting protein folding. The GroEL-GroES system forms a nano-cage that allows encapsulation of the non-native substrate proteins and provides a physical environment optimized to promote and accelerate protein folding. This is Chaperonin GroEL 1 from Rhizobium johnstonii (strain DSM 114642 / LMG 32736 / 3841) (Rhizobium leguminosarum bv. viciae).